The sequence spans 875 residues: MERAGPSFGQQRQQQQPQQQKQQQRDQDSVEAWLDDHWDFTFSYFVRKATREMVNAWFAERVHTIPVCKEGIRGHTESCSCPLQQSPRADNSAPGTPTRKISASEFDRPLRPIVVKDSEGTVSFLSDSEKKEQMPLTPPRFDHDEGDQCSRLLELVKDISSHLDVTALCHKIFLHIHGLISADRYSLFLVCEDSSNDKFLISRLFDVAEGSTLEEVSNNCIRLEWNKGIVGHVAALGEPLNIKDAYEDPRFNAEVDQITGYKTQSILCMPIKNHREEVVGVAQAINKKSGNGGTFTEKDEKDFAAYLAFCGIVLHNAQLYETSLLENKRNQVLLDLASLIFEEQQSLEVILKKIAATIISFMQVQKCTIFIVDEDCSDSFSSVFHMECEELEKSSDTLTREHDANKINYMYAQYVKNTMEPLNIPDVSKDKRFPWTTENTGNVNQQCIRSLLCTPIKNGKKNKVIGVCQLVNKMEENTGKVKPFNRNDEQFLEAFVIFCGLGIQNTQMYEAVERAMAKQMVTLEVLSYHASAAEEETRELQSLAAAVVPSAQTLKITDFSFSDFELSDLETALCTIRMFTDLNLVQNFQMKHEVLCRWILSVKKNYRKNVAYHNWRHAFNTAQCMFAALKAGKIQNKLTDLEILALLIAALSHDLDHRGVNNSYIQRSEHPLAQLYCHSIMEHHHFDQCLMILNSPGNQILSGLSIEEYKTTLKIIKQAILATDLALYIKRRGEFFELIRKNQFNLEDPHQKELFLAMLMTACDLSAITKPWPIQQRIAELVATEFFDQGDRERKELNIEPTDLMNREKKNKIPSMQVGFIDAICLQLYEALTHVSEDCFPLLDGCRKNRQKWQALAEQQEKMLINGESGQAKRN.

Disordered stretches follow at residues 1–29 (MERAGPSFGQQRQQQQPQQQKQQQRDQDS) and 78–102 (SCSCPLQQSPRADNSAPGTPTRKIS). A compositionally biased stretch (low complexity) spans 10–22 (QQRQQQQPQQQKQ). Positions 78-101 (SCSCPLQQSPRADNSAPGTPTRKI) are enriched in polar residues. Position 102 is a phosphoserine (Ser-102). GAF domains are found at residues 164 to 314 (DVTA…GIVL) and 346 to 503 (SLEV…GLGI). A PDEase domain is found at 536 to 860 (ETRELQSLAA…QKWQALAEQQ (325 aa)). His-613 (proton donor) is an active-site residue. Residues His-617, His-653, Asp-654, and Asp-764 each contribute to the Zn(2+) site. Asp-654 is a Mg(2+) binding site. Gln-817 provides a ligand contact to 3',5'-cyclic GMP.

Belongs to the cyclic nucleotide phosphodiesterase family. Zn(2+) is required as a cofactor. The cofactor is Mg(2+). Phosphorylation is regulated by binding of cGMP to the two allosteric sites. Phosphorylation by PRKG1 leads to its activation. In terms of tissue distribution, expressed in aortic smooth muscle cells, heart, placenta, skeletal muscle and pancreas and, to a much lesser extent, in brain, liver and lung.

It carries out the reaction 3',5'-cyclic GMP + H2O = GMP + H(+). It functions in the pathway purine metabolism; 3',5'-cyclic GMP degradation; GMP from 3',5'-cyclic GMP: step 1/1. With respect to regulation, sildenafil (Viagra) is a highly selective and potent inhibitor of PDE5A and is effective in the treatment of penile erectile dysfunction. Also inhibited by zaprinast. Functionally, plays a role in signal transduction by regulating the intracellular concentration of cyclic nucleotides. This phosphodiesterase catalyzes the specific hydrolysis of cGMP to 5'-GMP. Specifically regulates nitric-oxide-generated cGMP. This is cGMP-specific 3',5'-cyclic phosphodiesterase from Homo sapiens (Human).